The following is a 314-amino-acid chain: MMGQNQTSISDFLLLGLPIQPEQQNLCYALFLAMYLTTLLGNLLIIVLIRLDSHLHTPMYLFLSNLSFSDLCFSSVTIPKLLQNMQNQDPSIPYADCLTQMHFFLLFGDLESFLLVAMAYDRYVAICFPLHYTAIMSPMLCLSVVALSWVLTTFHAMLHTLLMARLCFCADNVIPHFFCDMSALLKLACSDTRVNEWVIFIMGGLIVVIPFLLILGSYARIVSSILKVPSFKGICKALSTCGSHLSVVSLFYGTVIGLYLCPSANSSTLKDTVMAMMYTVVTPMLNPFIYSLRNRDMKGALERVICKRKNPFLL.

Residues 1–25 (MMGQNQTSISDFLLLGLPIQPEQQN) are Extracellular-facing. N-linked (GlcNAc...) asparagine glycosylation is present at asparagine 5. A helical membrane pass occupies residues 26 to 49 (LCYALFLAMYLTTLLGNLLIIVLI). Residues 50-57 (RLDSHLHT) lie on the Cytoplasmic side of the membrane. The helical transmembrane segment at 58–79 (PMYLFLSNLSFSDLCFSSVTIP) threads the bilayer. At 80–100 (KLLQNMQNQDPSIPYADCLTQ) the chain is on the extracellular side. A disulfide bridge connects residues cysteine 97 and cysteine 189. Residues 101-120 (MHFFLLFGDLESFLLVAMAY) form a helical membrane-spanning segment. Over 121–139 (DRYVAICFPLHYTAIMSPM) the chain is Cytoplasmic. The chain crosses the membrane as a helical span at residues 140–158 (LCLSVVALSWVLTTFHAML). At 159 to 196 (HTLLMARLCFCADNVIPHFFCDMSALLKLACSDTRVNE) the chain is on the extracellular side. The chain crosses the membrane as a helical span at residues 197–219 (WVIFIMGGLIVVIPFLLILGSYA). At 220 to 236 (RIVSSILKVPSFKGICK) the chain is on the cytoplasmic side. A helical transmembrane segment spans residues 237–260 (ALSTCGSHLSVVSLFYGTVIGLYL). The Extracellular segment spans residues 261 to 272 (CPSANSSTLKDT). Asparagine 265 is a glycosylation site (N-linked (GlcNAc...) asparagine). A helical transmembrane segment spans residues 273 to 292 (VMAMMYTVVTPMLNPFIYSL). At 293–314 (RNRDMKGALERVICKRKNPFLL) the chain is on the cytoplasmic side.

The protein belongs to the G-protein coupled receptor 1 family.

Its subcellular location is the cell membrane. Its function is as follows. Odorant receptor. The chain is Olfactory receptor 1E2 (OR1E2) from Pan troglodytes (Chimpanzee).